Consider the following 381-residue polypeptide: Pentatricopeptide repeat-containing protein 2, mitochondrial (381 aa).

The stretch at 157–191 is one PPR repeat; it reads DTTSFNITIDMLFNKQLYESGLEVVGEMKKQGVSL.

The protein belongs to the PTCD2 family.

It is found in the mitochondrion. Involved in mitochondrial RNA maturation and mitochondrial respiratory chain function. The protein is Pentatricopeptide repeat-containing protein 2, mitochondrial (ptcd2) of Danio rerio (Zebrafish).